Consider the following 182-residue polypeptide: UPF0316 protein Sde_0566 (182 aa).

3 helical membrane-spanning segments follow: residues 7-27 (VAPE…VSLG), 41-61 (LAAF…GQVF), and 67-87 (WYLA…GMWI).

It belongs to the UPF0316 family.

The protein resides in the cell membrane. This is UPF0316 protein Sde_0566 from Saccharophagus degradans (strain 2-40 / ATCC 43961 / DSM 17024).